A 307-amino-acid chain; its full sequence is Probable GTP 3',8-cyclase (307 aa).

A Radical SAM core domain is found at 5-231 (RFGRPVTNLR…MHRRKKYFIP (227 aa)). Arginine 14 provides a ligand contact to GTP. [4Fe-4S] cluster contacts are provided by cysteine 21, cysteine 25, and cysteine 28. Lysine 62 lines the GTP pocket. S-adenosyl-L-methionine is bound at residue glycine 66. A GTP-binding site is contributed by threonine 91. Serine 115 is an S-adenosyl-L-methionine binding site. Lysine 151 is a GTP binding site. Methionine 190 contacts S-adenosyl-L-methionine. Residues cysteine 251 and cysteine 254 each coordinate [4Fe-4S] cluster. 256-258 (RLR) contacts GTP. Cysteine 268 provides a ligand contact to [4Fe-4S] cluster.

Belongs to the radical SAM superfamily. MoaA family. [4Fe-4S] cluster serves as cofactor.

The catalysed reaction is GTP + AH2 + S-adenosyl-L-methionine = (8S)-3',8-cyclo-7,8-dihydroguanosine 5'-triphosphate + 5'-deoxyadenosine + L-methionine + A + H(+). It functions in the pathway cofactor biosynthesis; molybdopterin biosynthesis. Catalyzes the cyclization of GTP to (8S)-3',8-cyclo-7,8-dihydroguanosine 5'-triphosphate. The chain is Probable GTP 3',8-cyclase from Thermococcus kodakarensis (strain ATCC BAA-918 / JCM 12380 / KOD1) (Pyrococcus kodakaraensis (strain KOD1)).